Reading from the N-terminus, the 84-residue chain is uncharacterized protein (84 aa).

Positions 5 to 31 form a coiled coil; sequence KIQEIINELDNLMNRERKYIELVATVE.

This is an uncharacterized protein from Methanocaldococcus jannaschii (strain ATCC 43067 / DSM 2661 / JAL-1 / JCM 10045 / NBRC 100440) (Methanococcus jannaschii).